Here is a 382-residue protein sequence, read N- to C-terminus: Alkaline serine protease ver112 (382 aa).

A signal peptide spans 1–15 (MRLSIIAAVLPLALA). Residues 16 to 102 (APVAEPEIAP…IEQDAIFSIN (87 aa)) constitute a propeptide that is removed on maturation. The region spanning 56-99 (SKIPGIERVYENVLNGFSATLSNEELERLRRDPDVESIEQDAIF) is the Inhibitor I9 domain. The Peptidase S8 domain maps to 111-382 (TWGLTRISHR…VNYLAFNGAT (272 aa)). Cystine bridges form between C138–C227 and C282–C353. Catalysis depends on charge relay system residues D143, H173, and S328.

Belongs to the peptidase S8 family.

The protein localises to the secreted. Its activity is regulated as follows. Inhibited by phenylmethylsulfonyl fluoride (PMSF). In terms of biological role, serine protease which can degrade the nematode cuticle. The sequence is that of Alkaline serine protease ver112 from Corniculantispora psalliotae (Lecanicillium psalliotae).